We begin with the raw amino-acid sequence, 67 residues long: Probable Sec-independent protein translocase protein TatE (67 aa).

Residues 4–21 (ISITKLLVVAALIVLVFG) traverse the membrane as a helical segment. Residues 43–67 (MNDDDTSVKKSAEEDVPADKISHKE) form a disordered region.

Belongs to the TatA/E family. TatE subfamily.

The protein resides in the cell inner membrane. Functionally, part of the twin-arginine translocation (Tat) system that transports large folded proteins containing a characteristic twin-arginine motif in their signal peptide across membranes. TatE shares overlapping functions with TatA. In Enterobacter lignolyticus (strain SCF1), this protein is Probable Sec-independent protein translocase protein TatE.